The sequence spans 395 residues: Calcium sensing receptor, chloroplastic (395 aa).

Low complexity predominate over residues 1-12; the sequence is MAPVPVSVSATL. The segment at 1 to 27 is disordered; sequence MAPVPVSVSATLAPPPAAPPKTTSRSW. The N-terminal 39 residues, 1-39, are a transit peptide targeting the chloroplast; the sequence is MAPVPVSVSATLAPPPAAPPKTTSRSWERRAPADAAFAA. The Lumenal, thylakoid segment spans residues 40 to 182; sequence ASSVAGSAAL…TITSLGPEDY (143 aa). A helical membrane pass occupies residues 183 to 203; that stretch reads VVAAGXAFLAYLLVPPVWSLV. Over 204–395 the chain is Stromal; sequence SSSLRGYKGD…TRKLLPGGVD (192 aa). One can recognise a Rhodanese domain in the interval 224-345; that stretch reads TTQGYVLIDV…WAQSRLGTDS (122 aa). At threonine 377 the chain carries Phosphothreonine.

Post-translationally, phosphorylated in both bundle sheath and mesophyll cells, under both low and high light regimes (70 vs 900 umol photons/m-2/s).

It localises to the plastid. Its subcellular location is the chloroplast thylakoid membrane. Modulates cytoplasmic Ca(2+) concentration and is crucial for proper stomatal regulation in response to elevated levels of external Ca(2+). May function by regulating concentrations of inositol 1,4,5-trisphosphate (IP3), which in turn triggers release of Ca(2+) from internal stores. May play a role in de-etiolation. The chain is Calcium sensing receptor, chloroplastic from Zea mays (Maize).